The following is a 279-amino-acid chain: Shikimate dehydrogenase (NADP(+)) (279 aa).

Shikimate-binding positions include 21–23 and Thr-68; that span reads SKS. Lys-72 functions as the Proton acceptor in the catalytic mechanism. Glu-84 serves as a coordination point for NADP(+). Shikimate is bound by residues Asn-93 and Asp-109. NADP(+) contacts are provided by residues 133 to 137, 157 to 162, and Met-220; these read GAGGA and NRTQAK. Tyr-222 is a shikimate binding site. Gly-244 contributes to the NADP(+) binding site.

This sequence belongs to the shikimate dehydrogenase family. As to quaternary structure, homodimer.

It catalyses the reaction shikimate + NADP(+) = 3-dehydroshikimate + NADPH + H(+). The protein operates within metabolic intermediate biosynthesis; chorismate biosynthesis; chorismate from D-erythrose 4-phosphate and phosphoenolpyruvate: step 4/7. In terms of biological role, involved in the biosynthesis of the chorismate, which leads to the biosynthesis of aromatic amino acids. Catalyzes the reversible NADPH linked reduction of 3-dehydroshikimate (DHSA) to yield shikimate (SA). This chain is Shikimate dehydrogenase (NADP(+)), found in Shewanella halifaxensis (strain HAW-EB4).